We begin with the raw amino-acid sequence, 407 residues long: [Pyruvate dehydrogenase (acetyl-transferring)] kinase isozyme 2, mitochondrial (407 aa).

The Histidine kinase domain maps to leucine 135–serine 364. A phosphotyrosine mark is found at tyrosine 215 and tyrosine 216. ATP contacts are provided by residues glutamate 251 to arginine 258, aspartate 290, serine 309 to threonine 310, and glycine 325 to leucine 330. The residue at position 376 (lysine 376) is an N6-succinyllysine.

This sequence belongs to the PDK/BCKDK protein kinase family. In terms of assembly, homodimer, and heterodimer with PDK1. Interacts with the pyruvate dehydrogenase complex subunit DLAT, and is part of the multimeric pyruvate dehydrogenase complex that contains multiple copies of pyruvate dehydrogenase (E1), dihydrolipoamide acetyltransferase (DLAT, E2) and lipoamide dehydrogenase (DLD, E3). As to expression, expressed in many tissues, with the highest level in heart and skeletal muscle, intermediate levels in brain, kidney, pancreas and liver, and low levels in placenta and lung.

The protein localises to the mitochondrion matrix. It carries out the reaction L-seryl-[pyruvate dehydrogenase E1 alpha subunit] + ATP = O-phospho-L-seryl-[pyruvate dehydrogenase E1 alpha subunit] + ADP + H(+). With respect to regulation, activity is enhanced by binding to the pyruvate dehydrogenase subunit DLAT. Inhibited by ADP and pyruvate; these compounds interfere with DLAT binding and thereby inhibit kinase activity. Inhibited by dichloroacetate. Inhibited by AZD7545; this compound interferes with DLAT binding and thereby inhibits kinase activity. Functionally, kinase that plays a key role in the regulation of glucose and fatty acid metabolism and homeostasis via phosphorylation of the pyruvate dehydrogenase subunits PDHA1 and PDHA2. This inhibits pyruvate dehydrogenase activity, and thereby regulates metabolite flux through the tricarboxylic acid cycle, down-regulates aerobic respiration and inhibits the formation of acetyl-coenzyme A from pyruvate. Inhibition of pyruvate dehydrogenase decreases glucose utilization and increases fat metabolism. Mediates cellular responses to insulin. Plays an important role in maintaining normal blood glucose levels and in metabolic adaptation to nutrient availability. Via its regulation of pyruvate dehydrogenase activity, plays an important role in maintaining normal blood pH and in preventing the accumulation of ketone bodies under starvation. Plays a role in the regulation of cell proliferation and in resistance to apoptosis under oxidative stress. Plays a role in p53/TP53-mediated apoptosis. This is [Pyruvate dehydrogenase (acetyl-transferring)] kinase isozyme 2, mitochondrial (PDK2) from Homo sapiens (Human).